Consider the following 340-residue polypeptide: Cobalt-precorrin-5B C(1)-methyltransferase (340 aa).

It belongs to the CbiD family.

The enzyme catalyses Co-precorrin-5B + S-adenosyl-L-methionine = Co-precorrin-6A + S-adenosyl-L-homocysteine. Its pathway is cofactor biosynthesis; adenosylcobalamin biosynthesis; cob(II)yrinate a,c-diamide from sirohydrochlorin (anaerobic route): step 6/10. Its function is as follows. Catalyzes the methylation of C-1 in cobalt-precorrin-5B to form cobalt-precorrin-6A. The chain is Cobalt-precorrin-5B C(1)-methyltransferase from Pyrobaculum aerophilum (strain ATCC 51768 / DSM 7523 / JCM 9630 / CIP 104966 / NBRC 100827 / IM2).